Here is a 320-residue protein sequence, read N- to C-terminus: o-succinylbenzoate synthase (320 aa).

The Proton donor role is filled by lysine 133. Mg(2+)-binding residues include aspartate 161, glutamate 190, and aspartate 213. The Proton acceptor role is filled by lysine 235.

Belongs to the mandelate racemase/muconate lactonizing enzyme family. MenC type 1 subfamily. Requires a divalent metal cation as cofactor.

It carries out the reaction (1R,6R)-6-hydroxy-2-succinyl-cyclohexa-2,4-diene-1-carboxylate = 2-succinylbenzoate + H2O. The protein operates within quinol/quinone metabolism; 1,4-dihydroxy-2-naphthoate biosynthesis; 1,4-dihydroxy-2-naphthoate from chorismate: step 4/7. It functions in the pathway quinol/quinone metabolism; menaquinone biosynthesis. Its function is as follows. Converts 2-succinyl-6-hydroxy-2,4-cyclohexadiene-1-carboxylate (SHCHC) to 2-succinylbenzoate (OSB). This Shigella boydii serotype 4 (strain Sb227) protein is o-succinylbenzoate synthase.